Here is a 158-residue protein sequence, read N- to C-terminus: Transcription elongation factor GreA (158 aa).

Positions 46–66 form a coiled coil; sequence AEYEAAKERQGFIEGRISELE.

It belongs to the GreA/GreB family.

Necessary for efficient RNA polymerase transcription elongation past template-encoded arresting sites. The arresting sites in DNA have the property of trapping a certain fraction of elongating RNA polymerases that pass through, resulting in locked ternary complexes. Cleavage of the nascent transcript by cleavage factors such as GreA or GreB allows the resumption of elongation from the new 3'terminus. GreA releases sequences of 2 to 3 nucleotides. The protein is Transcription elongation factor GreA of Neisseria meningitidis serogroup A / serotype 4A (strain DSM 15465 / Z2491).